We begin with the raw amino-acid sequence, 355 residues long: Histidinol-phosphate aminotransferase (355 aa).

N6-(pyridoxal phosphate)lysine is present on Lys218.

This sequence belongs to the class-II pyridoxal-phosphate-dependent aminotransferase family. Histidinol-phosphate aminotransferase subfamily. As to quaternary structure, homodimer. The cofactor is pyridoxal 5'-phosphate.

The enzyme catalyses L-histidinol phosphate + 2-oxoglutarate = 3-(imidazol-4-yl)-2-oxopropyl phosphate + L-glutamate. The protein operates within amino-acid biosynthesis; L-histidine biosynthesis; L-histidine from 5-phospho-alpha-D-ribose 1-diphosphate: step 7/9. In Chlorobaculum parvum (strain DSM 263 / NCIMB 8327) (Chlorobium vibrioforme subsp. thiosulfatophilum), this protein is Histidinol-phosphate aminotransferase.